A 787-amino-acid polypeptide reads, in one-letter code: Zinc finger protein 227 (787 aa).

Residues 23–94 (VTFKDVAVVF…ERETQRNGHS (72 aa)) form the KRAB domain. C2H2-type zinc fingers lie at residues 243–275 (HPCRVCGEGFSHGAVLPVHQVDPGEKCSHLQTH), 312–334 (YRCDSCGKAFGSSTGLIIHYRTH), 340–362 (YRCEACGKCFSQSSNFQCHQRVH), 368–390 (YKCEECGKGFGWSVNLRVHQRVH), 396–418 (YKCEECGKGFTQAAHYHIHQRVH), 424–446 (YKCDVCGKGFSHNSPLICHRRVH), 452–474 (YRCEACGKGFTRNTDLHIHFRVH), 480–502 (YTCKECGKGFSQASNLQVHQNVH), 508–530 (FKCETCGKGFSQSSKLQTHQRVH), 536–558 (YRCDVCGKDFSYSSNLKLHQVIH), 564–586 (YTCEACGKGFSWRSNLHAHQRVH), 592–614 (YKCEACDKSFSQAIDFRVHQRVH), 620–642 (YKCGVCGKGFSQSSGLQSHQRVH), 648–670 (YKCDVCGKGFRYSSQFIYHQRGH), 676–698 (YKCEECGKGFGRSLNLRHHQRVH), 704–726 (HKCEECGKAFSLPSNLRVHLSVH), 732–754 (FKCEDCGKGFSQSSRLQAHQRVH), and 760–782 (YKCNICGKDFSHRSRLTYHQKVH).

Belongs to the krueppel C2H2-type zinc-finger protein family.

It is found in the nucleus. In terms of biological role, may be involved in transcriptional regulation. This is Zinc finger protein 227 (ZNF227) from Bos taurus (Bovine).